The chain runs to 486 residues: Glycogen synthase (486 aa).

Lysine 20 contributes to the ADP-alpha-D-glucose binding site.

The protein belongs to the glycosyltransferase 1 family. Bacterial/plant glycogen synthase subfamily.

It catalyses the reaction [(1-&gt;4)-alpha-D-glucosyl](n) + ADP-alpha-D-glucose = [(1-&gt;4)-alpha-D-glucosyl](n+1) + ADP + H(+). Its pathway is glycan biosynthesis; glycogen biosynthesis. Functionally, synthesizes alpha-1,4-glucan chains using ADP-glucose. This chain is Glycogen synthase, found in Aeromonas salmonicida (strain A449).